The chain runs to 306 residues: Probable L,D-transpeptidase YbiS (306 aa).

The N-terminal stretch at 1–24 (MNMKLKTLFAAAFAVVGFCSTASA) is a signal peptide. Positions 99–234 (EGIVINSAEM…VPVGTRVQFI (136 aa)) constitute a L,D-TPase catalytic domain. The active-site Proton donor/acceptor is H194. C210 functions as the Nucleophile in the catalytic mechanism.

Belongs to the YkuD family.

Its subcellular location is the periplasm. It functions in the pathway cell wall biogenesis; peptidoglycan biosynthesis. Its function is as follows. Responsible, at least in part, for anchoring of the major outer membrane lipoprotein (Lpp) to the peptidoglycan via a meso-diaminopimelyl-L-Lys- bond on the terminal residue of Lpp. In Escherichia coli O6:H1 (strain CFT073 / ATCC 700928 / UPEC), this protein is Probable L,D-transpeptidase YbiS (ybiS).